Reading from the N-terminus, the 214-residue chain is Adenylate kinase (214 aa).

Position 10–15 (G10–T15) interacts with ATP. An NMP region spans residues S30–V59. Residues T31, R36, A57–V59, G85–R88, and Q92 each bind AMP. An LID region spans residues G126–D163. R127 serves as a coordination point for ATP. Zn(2+) is bound by residues C130, C133, C150, and C153. Positions 160 and 171 each coordinate AMP. G199 lines the ATP pocket.

It belongs to the adenylate kinase family. As to quaternary structure, monomer.

Its subcellular location is the cytoplasm. The enzyme catalyses AMP + ATP = 2 ADP. It participates in purine metabolism; AMP biosynthesis via salvage pathway; AMP from ADP: step 1/1. Its function is as follows. Catalyzes the reversible transfer of the terminal phosphate group between ATP and AMP. Plays an important role in cellular energy homeostasis and in adenine nucleotide metabolism. This Geotalea daltonii (strain DSM 22248 / JCM 15807 / FRC-32) (Geobacter daltonii) protein is Adenylate kinase.